A 434-amino-acid polypeptide reads, in one-letter code: Methylenetetrahydrofolate--tRNA-(uracil-5-)-methyltransferase TrmFO (434 aa).

9–14 (GAGLAG) contributes to the FAD binding site.

The protein belongs to the MnmG family. TrmFO subfamily. The cofactor is FAD.

Its subcellular location is the cytoplasm. The catalysed reaction is uridine(54) in tRNA + (6R)-5,10-methylene-5,6,7,8-tetrahydrofolate + NADH + H(+) = 5-methyluridine(54) in tRNA + (6S)-5,6,7,8-tetrahydrofolate + NAD(+). It carries out the reaction uridine(54) in tRNA + (6R)-5,10-methylene-5,6,7,8-tetrahydrofolate + NADPH + H(+) = 5-methyluridine(54) in tRNA + (6S)-5,6,7,8-tetrahydrofolate + NADP(+). Catalyzes the folate-dependent formation of 5-methyl-uridine at position 54 (M-5-U54) in all tRNAs. This chain is Methylenetetrahydrofolate--tRNA-(uracil-5-)-methyltransferase TrmFO, found in Fusobacterium nucleatum subsp. nucleatum (strain ATCC 25586 / DSM 15643 / BCRC 10681 / CIP 101130 / JCM 8532 / KCTC 2640 / LMG 13131 / VPI 4355).